We begin with the raw amino-acid sequence, 43 residues long: CLAVATA3/ESR (CLE)-related protein 16D10 (43 aa).

A signal peptide spans 1 to 30 (MFTNSIKNLIIYLMPLMVTLMLLSVSFVDA). The CLE motif lies at 31–43 (GKKPSGPNPGGNN).

This sequence belongs to the CLV3/ESR signal peptide family. As to expression, highly expressed exclusively within the subventral esophageal gland cell during syncytium formation in host plants.

Its subcellular location is the secreted. The protein resides in the host cytoplasm. It localises to the host extracellular space. Plays a role in the differentiation or division of feeding cells (syncytia) induced in plant roots during infection. Promotes host root growth. This chain is CLAVATA3/ESR (CLE)-related protein 16D10 (16D10), found in Meloidogyne arenaria (Peanut root-knot nematode).